The chain runs to 383 residues: Queuine tRNA-ribosyltransferase (383 aa).

Asp-92 (proton acceptor) is an active-site residue. Residues 92-96 (DSGGF), Asp-146, Gln-190, and Gly-217 each bind substrate. The interval 248–254 (GVGKPED) is RNA binding. Residue Asp-267 is the Nucleophile of the active site. The tract at residues 272 to 276 (TRNAR) is RNA binding; important for wobble base 34 recognition. Positions 310, 312, 315, and 341 each coordinate Zn(2+).

This sequence belongs to the queuine tRNA-ribosyltransferase family. As to quaternary structure, homodimer. Within each dimer, one monomer is responsible for RNA recognition and catalysis, while the other monomer binds to the replacement base PreQ1. It depends on Zn(2+) as a cofactor.

It carries out the reaction 7-aminomethyl-7-carbaguanine + guanosine(34) in tRNA = 7-aminomethyl-7-carbaguanosine(34) in tRNA + guanine. It participates in tRNA modification; tRNA-queuosine biosynthesis. Its function is as follows. Catalyzes the base-exchange of a guanine (G) residue with the queuine precursor 7-aminomethyl-7-deazaguanine (PreQ1) at position 34 (anticodon wobble position) in tRNAs with GU(N) anticodons (tRNA-Asp, -Asn, -His and -Tyr). Catalysis occurs through a double-displacement mechanism. The nucleophile active site attacks the C1' of nucleotide 34 to detach the guanine base from the RNA, forming a covalent enzyme-RNA intermediate. The proton acceptor active site deprotonates the incoming PreQ1, allowing a nucleophilic attack on the C1' of the ribose to form the product. After dissociation, two additional enzymatic reactions on the tRNA convert PreQ1 to queuine (Q), resulting in the hypermodified nucleoside queuosine (7-(((4,5-cis-dihydroxy-2-cyclopenten-1-yl)amino)methyl)-7-deazaguanosine). The sequence is that of Queuine tRNA-ribosyltransferase from Psychrobacter sp. (strain PRwf-1).